Here is a 992-residue protein sequence, read N- to C-terminus: GYF domain-containing protein mpd2 (992 aa).

3 disordered regions span residues 24–105, 172–245, and 289–316; these read ANNS…SANP, GTAS…NVAS, and FSQSPLRRGPSRFPTNSNVPVGNSMSIR. 2 stretches are compositionally biased toward polar residues: residues 25–58 and 75–104; these read NNSSSSTTGAFPQLTSFTKPTATNGVDSPTSSHI and KSGNMWDSLNAPSELTSKNPTVSSTTSSAN. Position 175 is a phosphoserine (Ser-175). Residues 193–205 show a composition bias toward low complexity; it reads SPSSFSQSRSAVS. Polar residues-rich tracts occupy residues 214-237 and 301-315; these read TLQQPQRAGSDTFPDLNTSSSNQP and FPTNSNVPVGNSMSI. Thr-318 carries the phosphothreonine modification. Position 320 is a phosphoserine (Ser-320). Positions 336 to 359 are disordered; it reads KENASQPVAPSASQREHSAVNSPA. Positions 337-348 are enriched in polar residues; the sequence is ENASQPVAPSAS. Residues 386-434 enclose the GYF domain; the sequence is LLHWLYKDPQNNVQGPFTGVDMHQWYRAGYFPLGLPIKRLEEEEYYSLA. 8 disordered regions span residues 467–486, 496–563, 576–637, 651–682, 697–729, 760–794, 818–859, and 940–992; these read DLPLSNYLPESSEQNRGGNK, EVSN…NESL, SEET…HLPS, SEALPQVEKSNSDQPPVAIPSTSKTGSPWAKV, EKQNENLKSKVASNPVSQTSTNAKASTPALASG, AELAQNKQQSSVTTASPRSNALNANTPKAAAPSSN, VGPG…SSKL, and TGKD…KKRV. Polar residues-rich tracts occupy residues 474–483 and 507–532; these read LPESSEQNRG and ANSLSEISYNQQSECRSSELNVNEDS. Ser-509 carries the phosphoserine modification. 2 stretches are compositionally biased toward basic and acidic residues: residues 549–561 and 577–595; these read MYEKENTPIHHNE and EETKQEKPSKLKETVESKR. Over residues 596 to 606 the composition is skewed to polar residues; that stretch reads LSTGVQKQSPA. Phosphoserine is present on residues Ser-604 and Ser-637. Composition is skewed to polar residues over residues 658-676 and 707-721; these read EKSNSDQPPVAIPSTSKTG and VASNPVSQTSTNAKA. Residues Ser-775, Ser-829, Ser-838, and Ser-840 each carry the phosphoserine modification. Composition is skewed to polar residues over residues 825–859 and 943–966; these read VNQQSPSAQQTTRSPSKVSATLNAGNSQASTSSKL and DGQQSNNKSQSELGNSSGAWSQVV.

This sequence belongs to the SMY2/mpd2 family.

The protein resides in the cytoplasm. In terms of biological role, has a role in mRNA export from the nucleus. The chain is GYF domain-containing protein mpd2 (mpd2) from Schizosaccharomyces pombe (strain 972 / ATCC 24843) (Fission yeast).